The primary structure comprises 146 residues: Leghemoglobin Lb120-34 (146 aa).

One can recognise a Globin domain in the interval 2–146 (GFTEKQEALV…LASAIKKAMN (145 aa)). 2 positions are modified to nitrated tyrosine: Tyr24 and Tyr29. A heme b-binding site is contributed by Ser44. The residue at position 44 (Ser44) is a Phosphoserine. Position 61 (His61) interacts with O2. Positions 64, 93, and 96 each coordinate heme b. Tyr134 is modified (nitrated tyrosine).

Belongs to the plant globin family. Monomer. Nitrated in effective nodules and particularly in hypoxic conditions; this mechanism may play a protective role in the symbiosis by buffering toxic peroxynitrite NO(2)(-). Nitration level decrease during nodule senescence. In terms of processing, phosphorylation at Ser-44 disrupts the molecular environment of its porphyrin ring oxygen binding pocket, thus leading to a reduced oxygen consumption and to the delivery of oxygen O(2) to symbiosomes. As to expression, root nodules.

It is found in the cytoplasm. The protein localises to the cytosol. Its subcellular location is the nucleus. Functionally, leghemoglobin that reversibly binds oxygen O(2) through a pentacoordinated heme iron. In root nodules, facilitates the diffusion of oxygen to the bacteroids while preventing the bacterial nitrogenase from being inactivated by buffering dioxygen, nitric oxide and carbon monoxide, and promoting the formation of reactive oxygen species (ROS, e.g. H(2)O(2)). This role is essential for symbiotic nitrogen fixation (SNF). The sequence is that of Leghemoglobin Lb120-34 from Pisum sativum (Garden pea).